We begin with the raw amino-acid sequence, 164 residues long: Deoxyuridine 5'-triphosphate nucleotidohydrolase (164 aa).

Substrate contacts are provided by residues 66–68, N79, 83–85, and K93; these read RSG and TVD.

This sequence belongs to the dUTPase family. The cofactor is Mg(2+).

The enzyme catalyses dUTP + H2O = dUMP + diphosphate + H(+). It functions in the pathway pyrimidine metabolism; dUMP biosynthesis; dUMP from dCTP (dUTP route): step 2/2. Its function is as follows. This enzyme is involved in nucleotide metabolism: it produces dUMP, the immediate precursor of thymidine nucleotides and it decreases the intracellular concentration of dUTP so that uracil cannot be incorporated into DNA. This Rhodococcus erythropolis (strain PR4 / NBRC 100887) protein is Deoxyuridine 5'-triphosphate nucleotidohydrolase.